A 40-amino-acid chain; its full sequence is Toxin CSTX-17 (40 aa).

Cystine bridges form between C2-C17, C9-C22, C16-C33, and C24-C31. W40 carries the tryptophan amide modification.

In terms of processing, contains 4 disulfide bonds. In terms of tissue distribution, expressed by the venom gland.

Its subcellular location is the secreted. The chain is Toxin CSTX-17 from Cupiennius salei (American wandering spider).